A 689-amino-acid polypeptide reads, in one-letter code: FAST kinase domain-containing protein 2, mitochondrial (689 aa).

A phosphoserine mark is found at serine 113 and serine 126. The RAP domain maps to 617–674 (VAVLCVPKSVYCLNSCHPRGLMAMKIRHLNVMGFHVILIHNWELKKLKMEDAVTFVRK).

This sequence belongs to the FAST kinase family. In terms of assembly, monomer. Found in a complex with GRSF1, DDX28, DHX30 and FASTKD5. Associates with the 16S mitochondrial rRNA (16S mt-rRNA). Forms a regulatory protein-RNA complex, consisting of RCC1L, NGRN, RPUSD3, RPUSD4, TRUB2, FASTKD2 and 16S mt-rRNA. As to expression, ubiquitously expressed. Expression detected in spleen, testis, colon, heart, smooth muscle, kidney, brain, lung, liver, brown and white adipose tissue with highest expression in testis, heart and smooth muscle.

The protein resides in the mitochondrion matrix. It localises to the mitochondrion nucleoid. Plays an important role in assembly of the mitochondrial large ribosomal subunit. As a component of a functional protein-RNA module, consisting of RCC1L, NGRN, RPUSD3, RPUSD4, TRUB2, FASTKD2 and 16S mitochondrial ribosomal RNA (16S mt-rRNA), controls 16S mt-rRNA abundance and is required for intra-mitochondrial translation. May play a role in mitochondrial apoptosis. In Mus musculus (Mouse), this protein is FAST kinase domain-containing protein 2, mitochondrial (Fastkd2).